We begin with the raw amino-acid sequence, 359 residues long: Elongation factor Ts 1, mitochondrial (359 aa).

Residues 323–341 (GKAAPAPKAEEPAAVAPAK) show a composition bias toward low complexity. The interval 323-345 (GKAAPAPKAEEPAAVAPAKADAE) is disordered.

Belongs to the EF-Ts family.

It is found in the mitochondrion. Functionally, associates with the EF-Tu.GDP complex and induces the exchange of GDP to GTP. It remains bound to the aminoacyl-tRNA.EF-Tu.GTP complex up to the GTP hydrolysis stage on the ribosome. In Thalassiosira pseudonana (Marine diatom), this protein is Elongation factor Ts 1, mitochondrial.